The primary structure comprises 600 residues: tRNA(Ile)-lysidine synthase, chloroplastic (600 aa).

An ATP-binding site is contributed by 35-40; sequence SGGQDS.

The protein belongs to the tRNA(Ile)-lysidine synthase family.

The protein resides in the plastid. It localises to the chloroplast. The catalysed reaction is cytidine(34) in tRNA(Ile2) + L-lysine + ATP = lysidine(34) in tRNA(Ile2) + AMP + diphosphate + H(+). Its function is as follows. Ligates lysine onto the cytidine present at position 34 of the AUA codon-specific tRNA(Ile) that contains the anticodon CAU, in an ATP-dependent manner. Cytidine is converted to lysidine, thus changing the amino acid specificity of the tRNA from methionine to isoleucine. In Tupiella akineta (Green alga), this protein is tRNA(Ile)-lysidine synthase, chloroplastic.